The sequence spans 391 residues: Small ribosomal subunit protein mS29 (391 aa).

The transit peptide at 1-17 (MLTGITRLFSRVQKLDP) directs the protein to the mitochondrion. The tract at residues 30–59 (NSQVPAERPRTVSRTSDSDPAKHGEQHEGQ) is disordered. Residues 45–59 (SDSDPAKHGEQHEGQ) are compositionally biased toward basic and acidic residues. 2 positions are modified to N6-acetyllysine: K168 and K200.

This sequence belongs to the mitochondrion-specific ribosomal protein mS29 family. Component of the mitochondrial ribosome small subunit (28S) which comprises a 12S rRNA and about 30 distinct proteins. Interacts with DELE1. Interacts with NOA1.

Its subcellular location is the mitochondrion. The catalysed reaction is GTP + H2O = GDP + phosphate + H(+). Its function is as follows. As a component of the mitochondrial small ribosomal subunit, it plays a role in the translation of mitochondrial mRNAs. Involved in mediating interferon-gamma-induced cell death. Displays GTPase activity in vitro. This Mus musculus (Mouse) protein is Small ribosomal subunit protein mS29.